A 270-amino-acid polypeptide reads, in one-letter code: Hematopoietically-expressed homeobox protein HHEX (270 aa).

Residues 1–137 form an interaction with SOX13 region; sequence MQYPHPGPAA…PFLQRPLHKR (137 aa). Position 53 is a phosphoserine (Ser53). Residues 137-196 constitute a DNA-binding region (homeobox); sequence RKGGQVRFSNDQTIELEKKFETQKYLSPPERKRLAKMLQLSERQVKTWFQNRRAKWRRLK. Residues 137 to 270 are required for WNT signaling induction; sequence RKGGQVRFSN…EGDKSYFNAG (134 aa). Residues 194–270 form a disordered region; sequence RLKQENPQSN…EGDKSYFNAG (77 aa). Residues 222-241 are compositionally biased toward polar residues; that stretch reads PSEQNKGASLDSSQCSPSPA. Acidic residues predominate over residues 244–260; that stretch reads EDLESEISEDSDQEVDI.

Interacts with CD81; the interaction prevents nuclear translocation of HHEX. Interacts (via N-terminus) with SOX13; abolishes the SOX13-mediated inhibition of WNT-mediated transcriptional activity via competitive inhibition of the SOX13-TCF7 complex. Interacts with EIF4E; the interaction inhibits EIF4E-mediated mRNA nuclear export. In terms of tissue distribution, liver and promyelocytic leukemia cell line HL-60.

The protein resides in the nucleus. It is found in the nuclear body. It localises to the cytoplasm. Its function is as follows. Recognizes the DNA sequence 5'-ATTAA-3'. Transcriptional repressor. Activator of WNT-mediated transcription in conjunction with CTNNB1. Establishes anterior identity at two levels; acts early to enhance canonical WNT-signaling by repressing expression of TLE4, and acts later to inhibit NODAL-signaling by directly targeting NODAL. Inhibits EIF4E-mediated mRNA nuclear export. May play a role in hematopoietic differentiation. In Homo sapiens (Human), this protein is Hematopoietically-expressed homeobox protein HHEX (HHEX).